The primary structure comprises 728 residues: 1,4-alpha-glucan branching enzyme GlgB (728 aa).

Asp405 serves as the catalytic Nucleophile. The active-site Proton donor is the Glu458.

It belongs to the glycosyl hydrolase 13 family. GlgB subfamily. As to quaternary structure, monomer.

It catalyses the reaction Transfers a segment of a (1-&gt;4)-alpha-D-glucan chain to a primary hydroxy group in a similar glucan chain.. It participates in glycan biosynthesis; glycogen biosynthesis. Functionally, catalyzes the formation of the alpha-1,6-glucosidic linkages in glycogen by scission of a 1,4-alpha-linked oligosaccharide from growing alpha-1,4-glucan chains and the subsequent attachment of the oligosaccharide to the alpha-1,6 position. The chain is 1,4-alpha-glucan branching enzyme GlgB from Salmonella paratyphi A (strain ATCC 9150 / SARB42).